A 448-amino-acid chain; its full sequence is Probable xyloglucan 6-xylosyltransferase 1 (448 aa).

Topologically, residues 1–19 (MWVAERVVGERRMREIQRF) are cytoplasmic. The helical; Signal-anchor for type II membrane protein transmembrane segment at 20–42 (ARNAKLTVVCLLLTVVVLRGTVG) threads the bilayer. At 43–448 (AGKFGTPQQD…AFKAMKTTST (406 aa)) the chain is on the lumenal side. Residues 71–113 (HHDALSRGGGSSSSSGRAAQRDDEPDPPPRTLRDPPYTLGPKI) are disordered. An N-linked (GlcNAc...) asparagine glycan is attached at asparagine 421.

The protein belongs to the glycosyltransferase 34 family.

The protein localises to the golgi apparatus membrane. The catalysed reaction is Transfers an alpha-D-xylosyl residue from UDP-D-xylose to a glucose residue in xyloglucan, forming an alpha-(1-&gt;6)-D-xylosyl-D-glucose linkage.. Functionally, probable xyloglucan xylosyltransferase involved in the biosynthesis of xyloglucan in roots. This Oryza sativa subsp. indica (Rice) protein is Probable xyloglucan 6-xylosyltransferase 1.